The chain runs to 422 residues: UPF0761 membrane protein LHK_02978 (422 aa).

Helical transmembrane passes span 44 to 64 (LLSL…FPVF), 102 to 122 (LTAV…LTID), 141 to 161 (MLVY…GISG), 178 to 198 (LAGI…LTVL), 212 to 232 (ALIG…GFGL), and 246 to 266 (AFAT…TVLI).

The protein belongs to the UPF0761 family.

It localises to the cell inner membrane. This is UPF0761 membrane protein LHK_02978 from Laribacter hongkongensis (strain HLHK9).